Reading from the N-terminus, the 431-residue chain is UDP-N-acetylglucosamine 1-carboxyvinyltransferase (431 aa).

Residue Lys25 to Asn26 coordinates phosphoenolpyruvate. Arg101 serves as a coordination point for UDP-N-acetyl-alpha-D-glucosamine. Cys125 functions as the Proton donor in the catalytic mechanism. Position 125 is a 2-(S-cysteinyl)pyruvic acid O-phosphothioketal (Cys125). The UDP-N-acetyl-alpha-D-glucosamine site is built by Asp317 and Ile339.

This sequence belongs to the EPSP synthase family. MurA subfamily.

The protein localises to the cytoplasm. It carries out the reaction phosphoenolpyruvate + UDP-N-acetyl-alpha-D-glucosamine = UDP-N-acetyl-3-O-(1-carboxyvinyl)-alpha-D-glucosamine + phosphate. The protein operates within cell wall biogenesis; peptidoglycan biosynthesis. Cell wall formation. Adds enolpyruvyl to UDP-N-acetylglucosamine. The sequence is that of UDP-N-acetylglucosamine 1-carboxyvinyltransferase from Thermobifida fusca (strain YX).